The chain runs to 225 residues: Protein-L-isoaspartate O-methyltransferase 2 (225 aa).

Residue Ser73 is part of the active site.

It belongs to the methyltransferase superfamily. L-isoaspartyl/D-aspartyl protein methyltransferase family.

Its subcellular location is the cytoplasm. The catalysed reaction is [protein]-L-isoaspartate + S-adenosyl-L-methionine = [protein]-L-isoaspartate alpha-methyl ester + S-adenosyl-L-homocysteine. Functionally, catalyzes the methyl esterification of L-isoaspartyl residues in peptides and proteins that result from spontaneous decomposition of normal L-aspartyl and L-asparaginyl residues. It plays a role in the repair and/or degradation of damaged proteins. The chain is Protein-L-isoaspartate O-methyltransferase 2 from Pelobacter propionicus (strain DSM 2379 / NBRC 103807 / OttBd1).